A 193-amino-acid polypeptide reads, in one-letter code: Acyl carrier protein phosphodiesterase (193 aa).

The protein belongs to the AcpH family.

It carries out the reaction holo-[ACP] + H2O = apo-[ACP] + (R)-4'-phosphopantetheine + H(+). Functionally, converts holo-ACP to apo-ACP by hydrolytic cleavage of the phosphopantetheine prosthetic group from ACP. The sequence is that of Acyl carrier protein phosphodiesterase from Salmonella paratyphi A (strain ATCC 9150 / SARB42).